The sequence spans 121 residues: Large ribosomal subunit protein uL14 (121 aa).

This sequence belongs to the universal ribosomal protein uL14 family. Part of the 50S ribosomal subunit. Forms a cluster with proteins L3 and L19. In the 70S ribosome, L14 and L19 interact and together make contacts with the 16S rRNA in bridges B5 and B8.

Functionally, binds to 23S rRNA. Forms part of two intersubunit bridges in the 70S ribosome. This Hydrogenobaculum sp. (strain Y04AAS1) protein is Large ribosomal subunit protein uL14.